The chain runs to 74 residues: Salivary glue protein Sgs-7 (74 aa).

Positions 1–23 (MKLIAVTIIACILLIGFSDLALG) are cleaved as a signal peptide.

The protein is Salivary glue protein Sgs-7 (Sgs7) of Drosophila melanogaster (Fruit fly).